Consider the following 156-residue polypeptide: Arginine repressor (156 aa).

It belongs to the ArgR family.

Its subcellular location is the cytoplasm. It participates in amino-acid biosynthesis; L-arginine biosynthesis [regulation]. Functionally, regulates arginine biosynthesis genes. The chain is Arginine repressor from Cronobacter sakazakii (strain ATCC BAA-894) (Enterobacter sakazakii).